A 296-amino-acid chain; its full sequence is Centromere protein O (296 aa).

Residues 17–105 (VLAHLERLET…NMKAILQAYR (89 aa)) are a coiled coil.

The protein belongs to the CENP-O/MCM21 family. As to quaternary structure, component of the CENPA-CAD complex, composed of CENPI, CENPK, CENPL, CENPO, CENPP, CENPQ, CENPR and CENPS. The CENPA-CAD complex interacts with the CENPA-NAC complex, at least composed of CENPA, CENPC, CENPH, CENPM, CENPN, CENPT and CENPU.

The protein resides in the nucleus. Its subcellular location is the chromosome. The protein localises to the centromere. It localises to the kinetochore. Functionally, component of the CENPA-CAD (nucleosome distal) complex, a complex recruited to centromeres which is involved in assembly of kinetochore proteins, mitotic progression and chromosome segregation. May be involved in incorporation of newly synthesized CENPA into centromeres via its interaction with the CENPA-NAC complex. Modulates the kinetochore-bound levels of NDC80 complex. This Bos taurus (Bovine) protein is Centromere protein O (CENPO).